Reading from the N-terminus, the 225-residue chain is ATP-dependent Clp protease proteolytic subunit (225 aa).

Catalysis depends on serine 123, which acts as the Nucleophile. Histidine 148 is a catalytic residue.

It belongs to the peptidase S14 family. Fourteen ClpP subunits assemble into 2 heptameric rings which stack back to back to give a disk-like structure with a central cavity, resembling the structure of eukaryotic proteasomes.

The protein resides in the cytoplasm. It carries out the reaction Hydrolysis of proteins to small peptides in the presence of ATP and magnesium. alpha-casein is the usual test substrate. In the absence of ATP, only oligopeptides shorter than five residues are hydrolyzed (such as succinyl-Leu-Tyr-|-NHMec, and Leu-Tyr-Leu-|-Tyr-Trp, in which cleavage of the -Tyr-|-Leu- and -Tyr-|-Trp bonds also occurs).. Its function is as follows. Cleaves peptides in various proteins in a process that requires ATP hydrolysis. Has a chymotrypsin-like activity. Plays a major role in the degradation of misfolded proteins. This chain is ATP-dependent Clp protease proteolytic subunit, found in Chlorobium phaeovibrioides (strain DSM 265 / 1930) (Prosthecochloris vibrioformis (strain DSM 265)).